We begin with the raw amino-acid sequence, 133 residues long: Major seminal plasma glycoprotein PSP-I (133 aa).

The N-terminal stretch at 1–24 is a signal peptide; sequence MKLGSAIPWALLFSTATLISTGWG. A disulfide bridge connects residues cysteine 30 and cysteine 51. One can recognise a CUB domain in the interval 30–130; it reads CGGRLTDDYG…SPYEIIFLRD (101 aa). Asparagine 71 is a glycosylation site (N-linked (GlcNAc...) (complex) asparagine). Cysteines 74 and 95 form a disulfide.

As to quaternary structure, monomer or heterodimer with PSP-II (depending on the type of glycosylation of PSP-I). As to expression, seminal plasma or sperm.

The protein resides in the secreted. Its function is as follows. Not yet identified, major porcine seminal plasma protein. Can bind soybean trypsin inhibitor after deglycosylation. The sequence is that of Major seminal plasma glycoprotein PSP-I from Sus scrofa (Pig).